Here is a 135-residue protein sequence, read N- to C-terminus: C-type lectin Cal (135 aa).

4 disulfide bridges follow: Cys-3–Cys-14, Cys-31–Cys-131, Cys-38–Cys-133, and Cys-106–Cys-123. Residues 10–132 (MNGLCYKIFN…CESKDAFLCQ (123 aa)) form the C-type lectin domain. Residues Gln-96, Asp-98, Glu-104, Asn-119, and Asp-120 each coordinate Ca(2+). The short motif at 96 to 98 (QPD) is the Galactose-binding element.

Belongs to the true venom lectin family. In terms of assembly, homodecamer of disulfide-linked dimers arranged in two pseudo-5-fold symmetric pentamers. As to expression, expressed by the venom gland.

It is found in the secreted. Galactose-binding protein which recognizes specific carbohydrate structures and agglutinates a variety of animal cells by binding to cell-surface glycoproteins and glycolipids. Calcium-dependent lectin. Shows high hemagglutinating activity (MHC=10 ng/ml). The chain is C-type lectin Cal from Crotalus atrox (Western diamondback rattlesnake).